The sequence spans 456 residues: Phosphomethylpyrimidine synthase (456 aa).

Substrate contacts are provided by residues Asn80, Met109, Tyr139, His175, 195 to 197 (SRG), 236 to 239 (DSLR), and Glu275. His279 provides a ligand contact to Zn(2+). Tyr302 serves as a coordination point for substrate. Residue His343 coordinates Zn(2+). [4Fe-4S] cluster-binding residues include Cys423, Cys426, and Cys431.

It belongs to the ThiC family. Requires [4Fe-4S] cluster as cofactor.

The catalysed reaction is 5-amino-1-(5-phospho-beta-D-ribosyl)imidazole + S-adenosyl-L-methionine = 4-amino-2-methyl-5-(phosphooxymethyl)pyrimidine + CO + 5'-deoxyadenosine + formate + L-methionine + 3 H(+). The protein operates within cofactor biosynthesis; thiamine diphosphate biosynthesis. In terms of biological role, catalyzes the synthesis of the hydroxymethylpyrimidine phosphate (HMP-P) moiety of thiamine from aminoimidazole ribotide (AIR) in a radical S-adenosyl-L-methionine (SAM)-dependent reaction. This chain is Phosphomethylpyrimidine synthase, found in Prochlorococcus marinus (strain MIT 9515).